The chain runs to 148 residues: SsrA-binding protein (148 aa).

The disordered stretch occupies residues 119-148 (AKGKKQHDKRQSMKEADWKREKQRLIKHTR). The span at 127–142 (KRQSMKEADWKREKQR) shows a compositional bias: basic and acidic residues.

The protein belongs to the SmpB family.

Its subcellular location is the cytoplasm. Required for rescue of stalled ribosomes mediated by trans-translation. Binds to transfer-messenger RNA (tmRNA), required for stable association of tmRNA with ribosomes. tmRNA and SmpB together mimic tRNA shape, replacing the anticodon stem-loop with SmpB. tmRNA is encoded by the ssrA gene; the 2 termini fold to resemble tRNA(Ala) and it encodes a 'tag peptide', a short internal open reading frame. During trans-translation Ala-aminoacylated tmRNA acts like a tRNA, entering the A-site of stalled ribosomes, displacing the stalled mRNA. The ribosome then switches to translate the ORF on the tmRNA; the nascent peptide is terminated with the 'tag peptide' encoded by the tmRNA and targeted for degradation. The ribosome is freed to recommence translation, which seems to be the essential function of trans-translation. This Neisseria meningitidis serogroup C (strain 053442) protein is SsrA-binding protein.